The chain runs to 232 residues: Large ribosomal subunit protein uL1 (232 aa).

Belongs to the universal ribosomal protein uL1 family. Part of the 50S ribosomal subunit.

Binds directly to 23S rRNA. The L1 stalk is quite mobile in the ribosome, and is involved in E site tRNA release. Its function is as follows. Protein L1 is also a translational repressor protein, it controls the translation of the L11 operon by binding to its mRNA. This is Large ribosomal subunit protein uL1 from Chlamydia caviae (strain ATCC VR-813 / DSM 19441 / 03DC25 / GPIC) (Chlamydophila caviae).